Consider the following 621-residue polypeptide: uncharacterized protein (621 aa).

S269, S271, S274, S290, and S292 each carry phosphoserine. LRR repeat units lie at residues 333-354 (QLLY…VFLS), 357-379 (SLVS…GELP), 380-401 (QLCS…YHIS), 404-425 (HLQI…ENVP), 426-447 (SLEK…RRLV), and 451-472 (NFEE…YRIT). Residues 552 to 581 (SKNASGGDTSSNVSLLNGSASEEIPQNTES) are disordered.

It is found in the cytoplasm. The protein resides in the nucleus. The protein localises to the vacuole membrane. This is an uncharacterized protein from Schizosaccharomyces pombe (strain 972 / ATCC 24843) (Fission yeast).